The sequence spans 151 residues: Protein NrdI (151 aa).

The protein belongs to the NrdI family.

Probably involved in ribonucleotide reductase function. The polypeptide is Protein NrdI (Mesoplasma florum (strain ATCC 33453 / NBRC 100688 / NCTC 11704 / L1) (Acholeplasma florum)).